The chain runs to 306 residues: Serine/threonine-protein phosphatase PP2A-1 catalytic subunit (306 aa).

Residues D54, H56, D82, and N114 each contribute to the Mn(2+) site. H115 functions as the Proton donor in the catalytic mechanism. The Mn(2+) site is built by H164 and H238. L306 is subject to Leucine methyl ester.

Belongs to the PPP phosphatase family. PP-2A subfamily. PP2A consists of a common heterodimeric core enzyme, composed of a 36 kDa catalytic subunit (subunit C) and a 65 kDa constant regulatory subunit (subunit A), that associates with a variety of regulatory subunits such as subunits B (the R2/B/PR55/B55, R3/B''/PR72/PR130/PR59 and R5/B'/B56 families). Interacts with TAF12B. Interacts with SRK2E/OST1. Interacts with TAP46. Mn(2+) is required as a cofactor. In terms of processing, reversibly methyl esterified on Leu-306 by leucine carboxyl methyltransferase 1 (LCMT1) and pectin methylesterase 1 (PME1). Carboxyl methylation influences the affinity of the catalytic subunit for the different regulatory subunits, thereby modulating the PP2A holoenzyme's substrate specificity, enzyme activity and cellular localization. Post-translationally, phosphorylation of either threonine (by autophosphorylation-activated protein kinase) or tyrosine results in inactivation of the phosphatase. Auto-dephosphorylation has been suggested as a mechanism for reactivation.

It is found in the cytoplasm. It carries out the reaction O-phospho-L-seryl-[protein] + H2O = L-seryl-[protein] + phosphate. The enzyme catalyses O-phospho-L-threonyl-[protein] + H2O = L-threonyl-[protein] + phosphate. The chain is Serine/threonine-protein phosphatase PP2A-1 catalytic subunit from Arabidopsis thaliana (Mouse-ear cress).